The following is a 363-amino-acid chain: Phosphoribosylformylglycinamidine cyclo-ligase (363 aa).

It belongs to the AIR synthase family.

The protein localises to the cytoplasm. The enzyme catalyses 2-formamido-N(1)-(5-O-phospho-beta-D-ribosyl)acetamidine + ATP = 5-amino-1-(5-phospho-beta-D-ribosyl)imidazole + ADP + phosphate + H(+). The protein operates within purine metabolism; IMP biosynthesis via de novo pathway; 5-amino-1-(5-phospho-D-ribosyl)imidazole from N(2)-formyl-N(1)-(5-phospho-D-ribosyl)glycinamide: step 2/2. The sequence is that of Phosphoribosylformylglycinamidine cyclo-ligase from Parvibaculum lavamentivorans (strain DS-1 / DSM 13023 / NCIMB 13966).